A 394-amino-acid polypeptide reads, in one-letter code: RNA binding protein fox-1 homolog 2 (394 aa).

2 disordered regions span residues 1 to 70 and 83 to 135; these read MGRL…DYAG and TQAH…HVSN. 2 stretches are compositionally biased toward polar residues: residues 24 to 36 and 83 to 103; these read RDSQGNQEPTTTP and TQAHGEQSSNSPSTQNGSLTT. The segment covering 105–125 has biased composition (low complexity); the sequence is GGAQTDGQQSQTQSSENSESK. Residues 129-205 form the RRM domain; the sequence is KRLHVSNIPF…RKIEVNNATA (77 aa). The residue at position 285 (Arg285) is an Omega-N-methylarginine. An asymmetric dimethylarginine mark is found at Arg301 and Arg333. Residues Arg385 and Arg390 each carry the asymmetric dimethylarginine; alternate modification. Arg385 and Arg390 each carry omega-N-methylarginine; alternate.

As to quaternary structure, interacts with ER-alpha N-terminal activation domain. Interacts with RBPMS; the interaction allows cooperative assembly of stable cell-specific alternative splicing regulatory complexes.

It is found in the nucleus. The protein localises to the cytoplasm. Its function is as follows. RNA-binding protein that regulates alternative splicing events by binding to 5'-UGCAUGU-3' elements. Prevents binding of U2AF2 to the 3'-splice site. Regulates alternative splicing of tissue-specific exons and of differentially spliced exons during erythropoiesis. Seems to act as a coregulatory factor of ER-alpha. Together with RNA binding proteins RBPMS and MBNL1/2, activates vascular smooth muscle cells alternative splicing events. The polypeptide is RNA binding protein fox-1 homolog 2 (RBFOX2) (Bos taurus (Bovine)).